Consider the following 161-residue polypeptide: Cytochrome c-type biogenesis protein CcmE (161 aa).

The Cytoplasmic segment spans residues Met1–Arg8. A helical; Signal-anchor for type II membrane protein membrane pass occupies residues Leu9–Ala29. The Periplasmic segment spans residues Leu30 to Tyr161. His131 and Tyr135 together coordinate heme.

This sequence belongs to the CcmE/CycJ family.

The protein localises to the cell inner membrane. Functionally, heme chaperone required for the biogenesis of c-type cytochromes. Transiently binds heme delivered by CcmC and transfers the heme to apo-cytochromes in a process facilitated by CcmF and CcmH. The sequence is that of Cytochrome c-type biogenesis protein CcmE from Shewanella sediminis (strain HAW-EB3).